A 410-amino-acid chain; its full sequence is Phospho-N-acetylmuramoyl-pentapeptide-transferase (410 aa).

A run of 10 helical transmembrane segments spans residues 27–47 (RMIL…PYFI), 77–97 (TPTM…VLWM), 99–119 (LTHI…LIGG), 140–160 (LFFQ…SSVN), 213–233 (PVVT…FFVI), 248–268 (GLLA…AFVS), 288–308 (IAIY…YNGY), 312–332 (VFMG…SAVL), 337–357 (FLLG…ILQV), and 389–409 (VIRF…SLKF).

The protein belongs to the glycosyltransferase 4 family. MraY subfamily. Mg(2+) serves as cofactor.

The protein resides in the cell inner membrane. It carries out the reaction UDP-N-acetyl-alpha-D-muramoyl-L-alanyl-gamma-D-glutamyl-meso-2,6-diaminopimeloyl-D-alanyl-D-alanine + di-trans,octa-cis-undecaprenyl phosphate = di-trans,octa-cis-undecaprenyl diphospho-N-acetyl-alpha-D-muramoyl-L-alanyl-D-glutamyl-meso-2,6-diaminopimeloyl-D-alanyl-D-alanine + UMP. The protein operates within cell wall biogenesis; peptidoglycan biosynthesis. In terms of biological role, catalyzes the initial step of the lipid cycle reactions in the biosynthesis of the cell wall peptidoglycan: transfers peptidoglycan precursor phospho-MurNAc-pentapeptide from UDP-MurNAc-pentapeptide onto the lipid carrier undecaprenyl phosphate, yielding undecaprenyl-pyrophosphoryl-MurNAc-pentapeptide, known as lipid I. The sequence is that of Phospho-N-acetylmuramoyl-pentapeptide-transferase from Protochlamydia amoebophila (strain UWE25).